The following is a 253-amino-acid chain: 5'-nucleotidase SurE (253 aa).

Positions 8, 9, 39, and 91 each coordinate a divalent metal cation.

The protein belongs to the SurE nucleotidase family. A divalent metal cation serves as cofactor.

Its subcellular location is the cytoplasm. The enzyme catalyses a ribonucleoside 5'-phosphate + H2O = a ribonucleoside + phosphate. In terms of biological role, nucleotidase that shows phosphatase activity on nucleoside 5'-monophosphates. This Albidiferax ferrireducens (strain ATCC BAA-621 / DSM 15236 / T118) (Rhodoferax ferrireducens) protein is 5'-nucleotidase SurE.